The sequence spans 338 residues: Phenylalanine--tRNA ligase alpha subunit (338 aa).

Mg(2+) is bound at residue E252.

The protein belongs to the class-II aminoacyl-tRNA synthetase family. Phe-tRNA synthetase alpha subunit type 1 subfamily. As to quaternary structure, tetramer of two alpha and two beta subunits. It depends on Mg(2+) as a cofactor.

The protein localises to the cytoplasm. The enzyme catalyses tRNA(Phe) + L-phenylalanine + ATP = L-phenylalanyl-tRNA(Phe) + AMP + diphosphate + H(+). This is Phenylalanine--tRNA ligase alpha subunit (pheS) from Aquifex aeolicus (strain VF5).